A 166-amino-acid chain; its full sequence is Crossover junction endodeoxyribonuclease RuvC (166 aa).

Residues D7, E68, and D141 contribute to the active site. The Mg(2+) site is built by D7, E68, and D141.

The protein belongs to the RuvC family. Homodimer which binds Holliday junction (HJ) DNA. The HJ becomes 2-fold symmetrical on binding to RuvC with unstacked arms; it has a different conformation from HJ DNA in complex with RuvA. In the full resolvosome a probable DNA-RuvA(4)-RuvB(12)-RuvC(2) complex forms which resolves the HJ. The cofactor is Mg(2+).

Its subcellular location is the cytoplasm. The catalysed reaction is Endonucleolytic cleavage at a junction such as a reciprocal single-stranded crossover between two homologous DNA duplexes (Holliday junction).. Functionally, the RuvA-RuvB-RuvC complex processes Holliday junction (HJ) DNA during genetic recombination and DNA repair. Endonuclease that resolves HJ intermediates. Cleaves cruciform DNA by making single-stranded nicks across the HJ at symmetrical positions within the homologous arms, yielding a 5'-phosphate and a 3'-hydroxyl group; requires a central core of homology in the junction. The consensus cleavage sequence is 5'-(A/T)TT(C/G)-3'. Cleavage occurs on the 3'-side of the TT dinucleotide at the point of strand exchange. HJ branch migration catalyzed by RuvA-RuvB allows RuvC to scan DNA until it finds its consensus sequence, where it cleaves and resolves the cruciform DNA. This chain is Crossover junction endodeoxyribonuclease RuvC, found in Koribacter versatilis (strain Ellin345).